The primary structure comprises 204 residues: Sperm acrosome developmental regulator (204 aa).

A Phosphoserine modification is found at Ser65. The segment covering 172–184 (RRQERRRRHHLRA) has biased composition (basic residues). Positions 172–204 (RRQERRRRHHLRAHMGPQPDPAQGLKQDARSPL) are disordered.

It localises to the cytoplasmic vesicle. The protein resides in the secretory vesicle. The protein localises to the acrosome. In terms of biological role, may play an important role in acrosome formation and nucleus shaping during spermiogenesis. This is Sperm acrosome developmental regulator (SPACDR) from Bos taurus (Bovine).